The following is a 230-amino-acid chain: Cytidylate kinase (230 aa).

An ATP-binding site is contributed by 12–20 (GPSGAGKGT).

The protein belongs to the cytidylate kinase family. Type 1 subfamily.

It localises to the cytoplasm. It catalyses the reaction CMP + ATP = CDP + ADP. It carries out the reaction dCMP + ATP = dCDP + ADP. This chain is Cytidylate kinase, found in Shewanella sp. (strain W3-18-1).